The following is a 503-amino-acid chain: Maturase K (503 aa).

It belongs to the intron maturase 2 family. MatK subfamily.

It is found in the plastid. The protein localises to the chloroplast. Functionally, usually encoded in the trnK tRNA gene intron. Probably assists in splicing its own and other chloroplast group II introns. This chain is Maturase K, found in Thryptomene saxicola (Rock thryptomene).